Consider the following 124-residue polypeptide: Small ribosomal subunit protein uS12 (124 aa).

Residue aspartate 89 is modified to 3-methylthioaspartic acid. An N6-acetyllysine modification is found at lysine 108.

The protein belongs to the universal ribosomal protein uS12 family. In terms of assembly, part of the 30S ribosomal subunit. Contacts proteins S8 and S17. May interact with IF1 in the 30S initiation complex.

With S4 and S5 plays an important role in translational accuracy. Its function is as follows. Interacts with and stabilizes bases of the 16S rRNA that are involved in tRNA selection in the A site and with the mRNA backbone. Located at the interface of the 30S and 50S subunits, it traverses the body of the 30S subunit contacting proteins on the other side and probably holding the rRNA structure together. The combined cluster of proteins S8, S12 and S17 appears to hold together the shoulder and platform of the 30S subunit. The sequence is that of Small ribosomal subunit protein uS12 from Escherichia coli O6:K15:H31 (strain 536 / UPEC).